A 397-amino-acid chain; its full sequence is MLGFLSARQAGLEDPLRLRRAESTRRVLGLELNKDRDVERIHCSGVNTLDIEPVEGRYMLSGGSDGVIVLYDLENSSRQPYYTCKAVCSVGRSHPDVHKYSVETVQWYPHDTGMFTSSSFDKTLKVWDTNTLQIADVFNFEETVYSHHMSPVATKHCLVAVGTRGPKVQLCDLKSGSCSHILQGHRQEILAVSWSPRYEYILATASADSRAKLWDVRRASGCLITLDQHNGKKSQAAESANTAHNGKVNGLCFTSDGLHLLTVGTDNRMRLWNSSNGENTLVNYGKVYNDSRKGLKFTVSSGCSSEFVFVPYGSTIAVYTIYSGEQITMLKGHYKSVDCCVFQSNFQELYSGSRDCNILAWVPSLCESVPDDDDETSTRSQLNPAFEDAWSSSDEEG.

WD repeat units follow at residues 41–81 (IHCS…RQPY), 97–137 (VHKY…IADV), 184–224 (GHRQ…GCLI), 243–282 (AHNG…NTLV), and 332–371 (GHYK…SVPD). The interval 370-397 (PDDDDETSTRSQLNPAFEDAWSSSDEEG) is disordered. Phosphoserine occurs at positions 391, 392, and 393.

As to quaternary structure, part of the CSA complex (also named DCX(ERCC8) complex), a DCX E3 ubiquitin-protein ligase complex containing ERCC8, RBX1, DDB1 and CUL4A; the CSA complex interacts with RNA polymerase II; upon UV irradiation it interacts with the COP9 signalosome and preferentially with the hyperphosphorylated form of RNA polymerase II. Interacts with ERCC6/CSB (via CIM motif); promoting recruitment to lesion-stalled RNA polymerase II (Pol II). Interacts with KIAA1530/UVSSA. Interacts with a subunit of RNA polymerase II TFIIH.

It is found in the nucleus. The protein resides in the chromosome. The protein localises to the nucleus matrix. The protein operates within protein modification; protein ubiquitination. Substrate-recognition component of the CSA complex, a DCX (DDB1-CUL4-X-box) E3 ubiquitin-protein ligase complex, involved in transcription-coupled nucleotide excision repair (TC-NER), a process during which RNA polymerase II-blocking lesions are rapidly removed from the transcribed strand of active genes. Following recruitment to lesion-stalled RNA polymerase II (Pol II), the CSA complex mediates ubiquitination of Pol II subunit POLR2A/RPB1 at 'Lys-1268', a critical TC-NER checkpoint, governing RNA Pol II stability and initiating DNA damage excision by TFIIH recruitment. The CSA complex also promotes the ubiquitination and subsequent proteasomal degradation of ERCC6/CSB in a UV-dependent manner; ERCC6 degradation is essential for the recovery of RNA synthesis after transcription-coupled repair. Also plays a role in DNA double-strand breaks (DSSBs) repair by non-homologous end joining (NHEJ). The sequence is that of DNA excision repair protein ERCC-8 (ERCC8) from Bos taurus (Bovine).